Here is a 347-residue protein sequence, read N- to C-terminus: GMP reductase (347 aa).

108–131 (ADFQKTKDIMALTDDLIFICIDIA) contacts NADP(+). 2 residues coordinate K(+): Gly-181 and Gly-183. Cys-186 (thioimidate intermediate) is an active-site residue. 216–239 (IIGDGGCSCAGDVSKAFGGGADFV) contributes to the NADP(+) binding site.

The protein belongs to the IMPDH/GMPR family. GuaC type 1 subfamily. Homotetramer.

The catalysed reaction is IMP + NH4(+) + NADP(+) = GMP + NADPH + 2 H(+). Its function is as follows. Catalyzes the irreversible NADPH-dependent deamination of GMP to IMP. It functions in the conversion of nucleobase, nucleoside and nucleotide derivatives of G to A nucleotides, and in maintaining the intracellular balance of A and G nucleotides. This Aliivibrio fischeri (strain ATCC 700601 / ES114) (Vibrio fischeri) protein is GMP reductase.